A 250-amino-acid chain; its full sequence is Protein KPLCE (250 aa).

In terms of tissue distribution, skin-specific.

The protein is Protein KPLCE of Homo sapiens (Human).